A 167-amino-acid chain; its full sequence is Alanine- and arginine-rich domain-containing protein (167 aa).

Positions 140-167 (LKKRQDQELASKPQSPQDKEMNSECGSA) are disordered.

In terms of tissue distribution, preferentially expressed in testis both in embryo and adult. Expressed at much lower level in other tissues.

The sequence is that of Alanine- and arginine-rich domain-containing protein (Aard) from Mus musculus (Mouse).